The chain runs to 225 residues: Glutathione S-transferase-like protein tpcF (225 aa).

Positions 4 to 85 constitute a GST N-terminal domain; the sequence is IQPITVYGKG…YLVSHYDPDH (82 aa). The GST C-terminal domain maps to 92-225; sequence GSNLAALATQ…KGMADIFPST (134 aa).

Belongs to the GST superfamily. Specifically expressed in conidia.

The protein operates within secondary metabolite biosynthesis. Functionally, glutathione S-transferase-like protein; part of the gene cluster that mediates the biosynthesis of trypacidin, a mycotoxin with antiprotozoal activity and that plays a role in the infection process. The pathway begins with the synthesis of atrochrysone thioester by the polyketide synthase (PKS) tpcC. The atrochrysone carboxyl ACP thioesterase tpcB then breaks the thioester bond and releases the atrochrysone carboxylic acid from tpcC. The decarboxylase tpcK converts atrochrysone carboxylic acid to atrochrysone which is further reduced into emodin anthrone. The next step is performed by the emodin anthrone oxygenase tpcL that catalyzes the oxidation of emodinanthrone to emodin. Emodin O-methyltransferase encoded by tpcA catalyzes methylation of the 8-hydroxy group of emodin to form questin. Ring cleavage of questin by questin oxidase tpcI leads to desmethylsulochrin via several intermediates including questin epoxide. Another methylation step catalyzed by tpcM leads to the formation of sulochrin which is further converted to monomethylsulfochrin by tpcH. Finally, the tpcJ catalyzes the conversion of monomethylsulfochrin to trypacidin. Trypacidin is toxic for human pulmonary and bronchial epithelial cells by initiating the intracellular formation of nitric oxide (NO) and hydrogen peroxide (H(2)O(2)), thus triggering host necrotic cell death. The trypacidin pathway is also able to produce endocrocin via a distinct route from the endocrocin Enc pathway. This Aspergillus fumigatus (strain ATCC MYA-4609 / CBS 101355 / FGSC A1100 / Af293) (Neosartorya fumigata) protein is Glutathione S-transferase-like protein tpcF.